A 600-amino-acid polypeptide reads, in one-letter code: 69 kDa paraflagellar rod protein (600 aa).

Residues 335–355 are calmodulin-binding; that stretch reads DKQDEAWRRIQELERVLQRLG.

In terms of assembly, heterodimer of a 69 kDa and a 73 kDa protein.

It localises to the cell projection. Its subcellular location is the cilium. The protein localises to the flagellum. The protein resides in the cytoplasm. It is found in the cytoskeleton. Its function is as follows. Major component of the paraflagellar rod (PFR). The PFR is a highly ordered lattices of fibrous proteins that are located inside the flagellum and assume a fixed orientation with respect to the microtubular axoneme. In Trypanosoma brucei brucei, this protein is 69 kDa paraflagellar rod protein (PFRA).